Reading from the N-terminus, the 274-residue chain is ATP synthase subunit a (274 aa).

5 consecutive transmembrane segments (helical) span residues 43 to 63, 103 to 123, 149 to 169, 223 to 243, and 245 to 265; these read TLNI…LLVF, VIAP…MMDL, DVSI…FYSI, LIFI…LSVP, and AIFH…LTIV.

Belongs to the ATPase A chain family. F-type ATPases have 2 components, CF(1) - the catalytic core - and CF(0) - the membrane proton channel. CF(1) has five subunits: alpha(3), beta(3), gamma(1), delta(1), epsilon(1). CF(0) has three main subunits: a(1), b(2) and c(9-12). The alpha and beta chains form an alternating ring which encloses part of the gamma chain. CF(1) is attached to CF(0) by a central stalk formed by the gamma and epsilon chains, while a peripheral stalk is formed by the delta and b chains.

The protein resides in the cell inner membrane. Functionally, key component of the proton channel; it plays a direct role in the translocation of protons across the membrane. The sequence is that of ATP synthase subunit a from Yersinia pestis bv. Antiqua (strain Antiqua).